Consider the following 347-residue polypeptide: NADH-ubiquinone oxidoreductase chain 2 (347 aa).

A run of 11 helical transmembrane segments spans residues 2–22 (LSPL…LVTF), 26–46 (SWIL…PLMA), 60–80 (YFIA…LAAW), 94–114 (IILN…PMHF), 127–147 (TGMI…IQIA), 151–171 (NNAF…WGGL), 179–197 (IIAY…MAPF), 201–223 (ITWV…LNTL), 242–262 (MLLL…GFTN), 274–294 (NLVI…FFYT), and 325–345 (LMTM…AIFI).

It belongs to the complex I subunit 2 family.

The protein localises to the mitochondrion inner membrane. The enzyme catalyses a ubiquinone + NADH + 5 H(+)(in) = a ubiquinol + NAD(+) + 4 H(+)(out). Its function is as follows. Core subunit of the mitochondrial membrane respiratory chain NADH dehydrogenase (Complex I) that is believed to belong to the minimal assembly required for catalysis. Complex I functions in the transfer of electrons from NADH to the respiratory chain. The immediate electron acceptor for the enzyme is believed to be ubiquinone. The sequence is that of NADH-ubiquinone oxidoreductase chain 2 (MT-ND2) from Lampetra fluviatilis (European river lamprey).